The chain runs to 196 residues: Nucleoid occlusion factor SlmA (196 aa).

In terms of domain architecture, HTH tetR-type spans 7–68; sequence SNRREEILQA…GLIEFIEEAL (62 aa). Positions 31–50 form a DNA-binding region, H-T-H motif; it reads TTVKLAKQVGVSEAALYRHF. A coiled-coil region spans residues 65 to 142; the sequence is EEALMSRINR…QLRQILRERK (78 aa).

Belongs to the nucleoid occlusion factor SlmA family. As to quaternary structure, homodimer. Interacts with FtsZ.

It is found in the cytoplasm. The protein resides in the nucleoid. Its function is as follows. Required for nucleoid occlusion (NO) phenomenon, which prevents Z-ring formation and cell division over the nucleoid. Acts as a DNA-associated cell division inhibitor that binds simultaneously chromosomal DNA and FtsZ, and disrupts the assembly of FtsZ polymers. SlmA-DNA-binding sequences (SBS) are dispersed on non-Ter regions of the chromosome, preventing FtsZ polymerization at these regions. The chain is Nucleoid occlusion factor SlmA from Vibrio atlanticus (strain LGP32) (Vibrio splendidus (strain Mel32)).